The sequence spans 110 residues: ORC1-type DNA replication protein 3 (110 aa).

8–12 is a binding site for ATP; sequence SGKSL.

The protein belongs to the CDC6/cdc18 family.

Functionally, involved in regulation of DNA replication. This chain is ORC1-type DNA replication protein 3 (orc3), found in Halobacterium salinarum (strain ATCC 700922 / JCM 11081 / NRC-1) (Halobacterium halobium).